A 389-amino-acid polypeptide reads, in one-letter code: MMISEIRQELTDHIIPFWNKLRDDENGGFYGYLSYGLELDKKADKGVILHSRILWFYSNAYMTLGGDELLDNAKHAYEFIKNNCIDYEYGGVYWMMDFEGKPADTMKHTYNIAFAIYALSSYYRASGDKEALALAYRLFEDIEKNTLDEYGYREAFDRQWRLVDNEALSENGLKADKTMNAILHLIEAYTELYKADGNEKVADRLKFQLGQMRDIVYTPDTNALKVFFDTAFNLVGDIHSYGHDIEATWLMDRACDVLGDEDLKKQFAEMDLKISHNIQDIALEDGALNNERDKNEIDKTRVWWVQAEAVVGFINAYQHSGDEKFLESAKSVWENIKEYIIDKREGGEWYSEVTFDHTPHDYKETVGPWKCPYHNGRMCMEVITRGVDI.

The protein belongs to the cellobiose 2-epimerase family.

The catalysed reaction is D-cellobiose = beta-D-glucosyl-(1-&gt;4)-D-mannopyranose. In terms of biological role, catalyzes the reversible epimerization of cellobiose to 4-O-beta-D-glucopyranosyl-D-mannose (Glc-Man). The sequence is that of Cellobiose 2-epimerase from Ruminococcus albus (strain ATCC 27210 / DSM 20455 / JCM 14654 / NCDO 2250 / 7).